We begin with the raw amino-acid sequence, 291 residues long: Transmembrane protein 41B (291 aa).

The span at 1–11 (MAKGRVAERSQ) shows a compositional bias: basic and acidic residues. The segment at 1–38 (MAKGRVAERSQTEMLHSTPAGDRAVGTQGSAAPGNKDH) is disordered. Residue Thr18 is modified to Phosphothreonine. Transmembrane regions (helical) follow at residues 52 to 72 (TSLL…FLVY), 109 to 129 (FYVQ…TFAI), 147 to 169 (LALF…LSYL), 197 to 217 (LINY…FINI), 225 to 245 (PLKV…FVAI), and 262 to 282 (SWNS…PAIF). Residues 140–251 (GFLYPFPLAL…FVAIKAGTTL (112 aa)) form a VTT domain; required for its function in autophagy region.

This sequence belongs to the TMEM41 family. Interacts with VMP1. Interacts with COPA, COPB1, VDAC1 and ERLIN2. Interacts with ATG2A. Interacts with SURF4.

It is found in the endoplasmic reticulum membrane. It localises to the endomembrane system. It carries out the reaction a 1,2-diacyl-sn-glycero-3-phospho-L-serine(in) = a 1,2-diacyl-sn-glycero-3-phospho-L-serine(out). The catalysed reaction is cholesterol(in) = cholesterol(out). The enzyme catalyses a 1,2-diacyl-sn-glycero-3-phosphocholine(in) = a 1,2-diacyl-sn-glycero-3-phosphocholine(out). It catalyses the reaction a 1,2-diacyl-sn-glycero-3-phosphoethanolamine(in) = a 1,2-diacyl-sn-glycero-3-phosphoethanolamine(out). Functionally, phospholipid scramblase involved in lipid homeostasis and membrane dynamics processes. Has phospholipid scramblase activity toward cholesterol and phosphatidylserine, as well as phosphatidylethanolamine and phosphatidylcholine. Required for autophagosome formation: participates in early stages of autophagosome biogenesis at the endoplasmic reticulum (ER) membrane by reequilibrating the leaflets of the ER as lipids are extracted by ATG2 (ATG2A or ATG2B) to mediate autophagosome assembly. In addition to autophagy, involved in other processes in which phospholipid scramblase activity is required. Required for normal motor neuron development. This chain is Transmembrane protein 41B, found in Rattus norvegicus (Rat).